The following is a 115-amino-acid chain: Large ribosomal subunit protein bL19 (115 aa).

The protein belongs to the bacterial ribosomal protein bL19 family.

Functionally, this protein is located at the 30S-50S ribosomal subunit interface and may play a role in the structure and function of the aminoacyl-tRNA binding site. In Buchnera aphidicola subsp. Acyrthosiphon pisum (strain 5A), this protein is Large ribosomal subunit protein bL19.